The following is an 838-amino-acid chain: V-type proton ATPase 116 kDa subunit a 1 (838 aa).

The Cytoplasmic segment spans residues 1-388 (MGELFRSEEM…DAYGIGTYRE (388 aa)). The helical transmembrane segment at 389–407 (INPAPYTIITFPFLFAVMF) threads the bilayer. At 408–409 (GD) the chain is on the vacuolar side. Residues 410-426 (FGHGILMTLIAIWMVLR) traverse the membrane as a helical segment. Residues 427–441 (ESRILSQKSDNEMFS) are Cytoplasmic-facing. The helical transmembrane segment at 442–471 (TVFSGRYIILLMGLFSTYTGLIYNDCFSKS) threads the bilayer. Residues 472–535 (LNMFGSSWSV…ANNKLAFLNS (64 aa)) lie on the Vacuolar side of the membrane. A helical transmembrane segment spans residues 536–555 (FKMKMSVILGIIHMLFGVML). The Cytoplasmic portion of the chain corresponds to 556 to 573 (SLLNHIYFKKPLNIYLGF). The chain crosses the membrane as a helical span at residues 574-594 (IPEMIFMSSLFGYLVILIFYK). Residues 595 to 639 (WTAYDAHTSKEAPSPLIHFINMFLFSYGDTSNKMLYRGQKGIQCF) are Vacuolar-facing. The helical transmembrane segment at 640 to 659 (LVVVALLCVPWMLVAKPLVL) threads the bilayer. The Cytoplasmic segment spans residues 660–725 (RHQYLRRKHL…DTVVYQAIHT (66 aa)). The chain crosses the membrane as a helical span at residues 726-750 (IEYCLGCISNTASYLRLWALSLAHA). Topologically, residues 751 to 771 (QLSEVLWTMVIHTGLSVRSLA) are vacuolar. Residues 772-810 (GGFGLVFIFAAFATLTVAILLVMEGLSAFLHALRLHWIE) form a helical membrane-spanning segment. The Cytoplasmic segment spans residues 811–838 (FQNKFYTGTGFKFLPFSFDPIREGKFDD).

Belongs to the V-ATPase 116 kDa subunit family. As to quaternary structure, V-ATPase is a heteromultimeric enzyme made up of two complexes: the ATP-hydrolytic V1 complex and the proton translocation V0 complex. The V1 complex consists of three catalytic AB heterodimers that form a heterohexamer, three peripheral stalks each consisting of EG heterodimers, one central rotor including subunits D and F, and the regulatory subunits C and H. The proton translocation complex V0 consists of the proton transport subunit a, a ring of proteolipid subunits c9c'', rotary subunit d, subunits e and f, and two accessory subunits. Detected in brain (at protein level). Highest expression in brain, intermediate levels in kidney, and relatively low levels in bone and liver.

It is found in the cytoplasmic vesicle. Its subcellular location is the clathrin-coated vesicle membrane. It localises to the secretory vesicle. The protein localises to the synaptic vesicle membrane. The protein resides in the melanosome. Subunit of the V0 complex of vacuolar(H+)-ATPase (V-ATPase), a multisubunit enzyme composed of a peripheral complex (V1) that hydrolyzes ATP and a membrane integral complex (V0) that translocates protons. V-ATPase is responsible for acidifying and maintaining the pH of intracellular compartments and in some cell types, is targeted to the plasma membrane, where it is responsible for acidifying the extracellular environment. Required for assembly and activity of the vacuolar ATPase. This Gallus gallus (Chicken) protein is V-type proton ATPase 116 kDa subunit a 1 (ATP6V0A1).